The following is a 471-amino-acid chain: Ubiquitin carboxyl-terminal hydrolase calypso (471 aa).

Residues G45–P276 form the UCH catalytic domain. C131 (nucleophile) is an active-site residue. Residue H213 is the Proton donor of the active site. A ULD domain is found at N375–P403. The segment at K405–K471 is positively charged C-terminal tail required for binding nucleosomes. A disordered region spans residues Q410 to K471. A compositionally biased stretch (low complexity) spans S420 to A447. A compositionally biased stretch (basic residues) spans P457–K471.

The protein belongs to the peptidase C12 family. BAP1 subfamily. As to quaternary structure, catalytic component of the polycomb repressive deubiquitinase (PR-DUB) complex, at least composed of caly/calypso, Asx and sba (MBD5/6 homolog). The PR-DUB complex associates with nucleosomes to mediate deubiquitination of histone H2AK118ub1 substrates; the association requires the positively charged C-terminal tail of caly, probably due to direct binding of DNA. Interacts (via ULD domain) with Asx (via DEUBAD domain); the interaction produces a stable heterodimer with a composite binding site for ubiquitin. Homodimerizes (via coiled-coil hinge-region between the UCH and ULD domains) to mediate assembly of 2 copies of the caly-Asx heterodimer into a bisymmetric tetramer; dimerization enhances PR-DUB association with nucleosomes.

Its subcellular location is the nucleus. It catalyses the reaction Thiol-dependent hydrolysis of ester, thioester, amide, peptide and isopeptide bonds formed by the C-terminal Gly of ubiquitin (a 76-residue protein attached to proteins as an intracellular targeting signal).. In terms of biological role, catalytic component of the polycomb repressive deubiquitinase (PR-DUB) complex, a complex that specifically mediates deubiquitination of histone H2A monoubiquitinated at 'Lys-119' (H2AK118ub1). Mediates bisymmetric organization of the PR-DUB complex and is involved in association with nucleosomes to mediate deubiquitination. Does not deubiquitinate monoubiquitinated histone H2B. Required to maintain the transcriptionally repressive state of homeotic genes throughout development. The PR-DUB complex has weak or no activity toward 'Lys-48'- and 'Lys-63'-linked polyubiquitin chains. Polycomb group (PcG) protein. The polypeptide is Ubiquitin carboxyl-terminal hydrolase calypso (Drosophila yakuba (Fruit fly)).